The sequence spans 468 residues: 6-phospho-beta-galactosidase (468 aa).

The D-galactose 6-phosphate site is built by glutamine 19, histidine 116, asparagine 159, glutamate 160, and asparagine 297. Glutamate 160 serves as the catalytic Proton donor. Glutamate 375 acts as the Nucleophile in catalysis. The D-galactose 6-phosphate site is built by serine 428, tryptophan 429, lysine 435, and tyrosine 437.

It belongs to the glycosyl hydrolase 1 family.

The enzyme catalyses a 6-phospho-beta-D-galactoside + H2O = D-galactose 6-phosphate + an alcohol. The protein operates within carbohydrate metabolism; lactose degradation; D-galactose 6-phosphate and beta-D-glucose from lactose 6-phosphate: step 1/1. In Streptococcus pyogenes serotype M18 (strain MGAS8232), this protein is 6-phospho-beta-galactosidase.